Reading from the N-terminus, the 744-residue chain is Protein zyg-11 homolog B (744 aa).

LRR repeat units follow at residues 185-208, 216-236, and 237-261; these read LPRLESLDISNTSITDITALLACK, MHHLKCLKMTTTQILDVVREL, and KHLNHLDISDDKQFTSDIALRLLEQ.

This sequence belongs to the zyg-11 family. As to quaternary structure, (Microbial infection) Interacts with SARS-COV-2 protein ORF10. Interacts with ELOC/Elongin C. Part of an E3 ubiquitin ligase complex including ZYG11B, CUL2 and Elongin BC. In terms of processing, (Microbial infection) Ubiquitinated; leading to proteasomal degradation in the presence of herpes simplex virus 1/HHV-1.

It is found in the cytoplasm. Functionally, serves as substrate adapter subunit in the E3 ubiquitin ligase complex ZYG11B-CUL2-Elongin BC. Acts to target substrates bearing N-terminal degrons for proteasomal degradation with the first four residues of substrates being the key recognition elements. Prefers Nt-Gly but also has the capacity to recognize Nt-Ser, -Ala and -Cys. Involved in the clearance of proteolytic fragments generated by caspase cleavage during apoptosis since N-terminal glycine degrons are strongly enriched at caspase cleavage sites. Also important in the quality control of protein N-myristoylation in which N-terminal glycine degrons are conditionally exposed after a failure of N-myristoylation. In addition, plays a role in the amplification of cGAS to enhance innate immune response. Mechanistically, strengthens the processes of cGAS binding with dsDNA and assembling oligomers and also accelerates and stabilizes cGAS-DNA condensation, thereby enhancing production of antiviral IFNs and inflammatory cytokines. This chain is Protein zyg-11 homolog B, found in Homo sapiens (Human).